Here is a 932-residue protein sequence, read N- to C-terminus: Chitin synthase regulatory factor 3 (932 aa).

Residues 1–16 (MKDSHSSRRKYEKEKL) are compositionally biased toward basic and acidic residues. Disordered stretches follow at residues 1-53 (MKDS…PTSR), 264-356 (TLEE…LQQP), and 374-406 (EVPA…NPTV). 3 stretches are compositionally biased toward polar residues: residues 35–53 (SGNT…PTSR), 274–285 (DSITNTVSNASS), and 308–319 (SHFSSTDSNTDS). Residues 337–349 (KSSETLKNPRNDD) show a composition bias toward basic and acidic residues. A Phosphoserine modification is found at S393. Sel1-like repeat units lie at residues 638 to 674 (PEAL…KKGH), 675 to 710 (PLSN…EMDV), 711 to 747 (VEAM…KSKG), 751 to 788 (VRAM…VYGY), 789 to 825 (AAAQ…EQDY), 826 to 863 (GEAE…CKGL), and 864 to 899 (AKAQ…KQGF). Positions 905–932 (RLEEQALSSKQTHSKAPKKKQQEQCVVM) are disordered.

This chain is Chitin synthase regulatory factor 3 (chr3), found in Schizosaccharomyces pombe (strain 972 / ATCC 24843) (Fission yeast).